Here is a 120-residue protein sequence, read N- to C-terminus: Flagellar protein FliT (120 aa).

The segment at 1–50 is required for homodimerization; that stretch reads MERHQHLLSEYQQILTLSEQMLMLATVENWNTLVDLEMTYLKAVENTANI. The segment at 60-98 is fliD binding; sequence LQELLRQKLRSILENEIEIKRLLQRRLDKLSELVGQSTR.

Belongs to the FliT family. In terms of assembly, homodimer. Interacts with FliD and FlhC.

The protein localises to the cytoplasm. It localises to the cytosol. Functionally, dual-function protein that regulates the transcription of class 2 flagellar operons and that also acts as an export chaperone for the filament-capping protein FliD. As a transcriptional regulator, acts as an anti-FlhDC factor; it directly binds FlhC, thus inhibiting the binding of the FlhC/FlhD complex to class 2 promoters, resulting in decreased expression of class 2 flagellar operons. As a chaperone, effects FliD transition to the membrane by preventing its premature polymerization, and by directing it to the export apparatus. In Yersinia pestis (strain Pestoides F), this protein is Flagellar protein FliT.